We begin with the raw amino-acid sequence, 409 residues long: Failed axon connections homolog (409 aa).

Residues 68–88 (YLTGGALLAAAAYLLHELLVI) traverse the membrane as a helical segment. The segment at 372–393 (DEGAENSFSRTPDTDFTGHSLF) is disordered.

It belongs to the FAX family.

The protein resides in the membrane. May play a role in axonal development. The sequence is that of Failed axon connections homolog (Faxc) from Mus musculus (Mouse).